Here is an 865-residue protein sequence, read N- to C-terminus: LINE-1 type transposase domain-containing protein 1 (865 aa).

Ser-2 carries the post-translational modification N-acetylserine. Ser-2 is subject to Phosphoserine. The residue at position 149 (Thr-149) is a Phosphothreonine. Position 154 is a phosphoserine (Ser-154). The interval 370-508 (EMKNLETQEE…EKKASRRQKE (139 aa)) is disordered. Acidic residues-rich tracts occupy residues 376-440 (TQEE…EQTS) and 472-483 (SVEDSESEEEEE). Phosphoserine occurs at positions 472, 476, and 478. A compositionally biased stretch (basic and acidic residues) spans 498–508 (TEKKASRRQKE). Ser-518, Ser-561, and Ser-573 each carry phosphoserine. The segment covering 590-608 (EEKKHRTLHTEELTSKEAD) has biased composition (basic and acidic residues). The segment at 590–612 (EEKKHRTLHTEELTSKEADLTEE) is disordered. A phosphoserine mark is found at Ser-640, Ser-648, and Ser-665. Residues 642 to 684 (VLEIENSVDDLSSRMDILEERIDSLEDQIEEFSKDTMQMTKQI) are a coiled coil.

The protein belongs to the transposase 22 family.

This is LINE-1 type transposase domain-containing protein 1 (L1TD1) from Homo sapiens (Human).